The chain runs to 435 residues: MNDMNAKKPALRVAIVGGGISGLALALSLCKHSHLNVQLFEAAPAFGEVGAGVSFGPNAVRAIVGLGLGQAYFQVADRTPQPWEDIWFEWRRGSDASYLGATIAGVGQSSVHRADFLDALVKHLPEGIAQFRKRATQIEQQGDELQVLFRDGTEYRCDLLIGRDGIKSALRSYVLEGQGQDHLEPRFSGTCAYRGMVDSLQLREAYRINGIDEHLVDVPQMYLGLYGHILTFPVRKGRIVNVVAFTSDRSQPEPTWPADAPWVREASQREMLDAFAGWGDARALLECIPAPTLWALHDLPELPGYVHGRVALIGDAAHAMLPHQGAGAGQGLEDAYFLARLLGDSRTETGNLPELLGAYDDLRRPHACRVQRTTVETGELYELRDPIVGADEQLVGEILATRFDWLWNHDLDADVAEARLRMGWEAHEQIALRQG.

12–41 contacts FAD; the sequence is RVAIVGGGISGLALALSLCKHSHLNVQLFE.

It depends on FAD as a cofactor.

It catalyses the reaction salicylate + NADH + O2 + 2 H(+) = catechol + CO2 + NAD(+) + H2O. The protein operates within aromatic compound metabolism; naphthalene degradation. In Pseudomonas putida (Arthrobacter siderocapsulatus), this protein is Salicylate hydroxylase (nahG).